We begin with the raw amino-acid sequence, 92 residues long: Elongation factor 1-beta (92 aa).

It belongs to the EF-1-beta/EF-1-delta family.

Promotes the exchange of GDP for GTP in EF-1-alpha/GDP, thus allowing the regeneration of EF-1-alpha/GTP that could then be used to form the ternary complex EF-1-alpha/GTP/AAtRNA. The protein is Elongation factor 1-beta of Pyrobaculum arsenaticum (strain DSM 13514 / JCM 11321 / PZ6).